The sequence spans 160 residues: ATP synthase subunit delta, mitochondrial (160 aa).

Residues 1–22 constitute a mitochondrion transit peptide; the sequence is MLRSIIGKSASRSLNFVAKRSY.

The protein belongs to the ATPase epsilon chain family. In terms of assembly, F-type ATPases have 2 components, CF(1) - the catalytic core - and CF(0) - the membrane proton channel. CF(1) has five subunits: alpha(3), beta(3), gamma(1), delta(1), epsilon(1). CF(0) has three main subunits: a, b and c.

It localises to the mitochondrion. It is found in the mitochondrion inner membrane. Its function is as follows. Mitochondrial membrane ATP synthase (F(1)F(0) ATP synthase or Complex V) produces ATP from ADP in the presence of a proton gradient across the membrane which is generated by electron transport complexes of the respiratory chain. F-type ATPases consist of two structural domains, F(1) - containing the extramembraneous catalytic core, and F(0) - containing the membrane proton channel, linked together by a central stalk and a peripheral stalk. During catalysis, ATP turnover in the catalytic domain of F(1) is coupled via a rotary mechanism of the central stalk subunits to proton translocation. Part of the complex F(1) domain and of the central stalk which is part of the complex rotary element. Rotation of the central stalk against the surrounding alpha(3)beta(3) subunits leads to hydrolysis of ATP in three separate catalytic sites on the beta subunits. This chain is ATP synthase subunit delta, mitochondrial (ATP16), found in Saccharomyces cerevisiae (strain ATCC 204508 / S288c) (Baker's yeast).